A 150-amino-acid chain; its full sequence is Large ribosomal subunit protein bL9 (150 aa).

This sequence belongs to the bacterial ribosomal protein bL9 family.

In terms of biological role, binds to the 23S rRNA. This chain is Large ribosomal subunit protein bL9, found in Shewanella frigidimarina (strain NCIMB 400).